An 81-amino-acid chain; its full sequence is Exodeoxyribonuclease 7 small subunit (81 aa).

This sequence belongs to the XseB family. As to quaternary structure, heterooligomer composed of large and small subunits.

It localises to the cytoplasm. It carries out the reaction Exonucleolytic cleavage in either 5'- to 3'- or 3'- to 5'-direction to yield nucleoside 5'-phosphates.. Bidirectionally degrades single-stranded DNA into large acid-insoluble oligonucleotides, which are then degraded further into small acid-soluble oligonucleotides. This is Exodeoxyribonuclease 7 small subunit from Ruegeria sp. (strain TM1040) (Silicibacter sp.).